The following is a 558-amino-acid chain: Putative transposase for insertion sequence IS1162 (558 aa).

Residues 11-93 enclose the HTH IS408-type domain; that stretch reads IKECLRLKFE…PDLITIHREL (83 aa). Positions 23–44 form a DNA-binding region, H-T-H motif; sequence LSHEKIARALQLSKGVVSKYVT. The Integrase catalytic domain maps to 139–336; sequence QQHRAGEKLF…HPYEVVTFKR (198 aa). Residues 486–558 form a disordered region; the sequence is QGLDQQPLPK…AAGQPQPELR (73 aa).

Belongs to the transposase IS21/IS408/IS1162 family.

Required for the transposition of the insertion element. This chain is Putative transposase for insertion sequence IS1162, found in Pseudomonas fluorescens.